Consider the following 174-residue polypeptide: Mediator of RNA polymerase II transcription subunit 30 (174 aa).

Residues 113–166 (VEDDSSKLEDRMANQLRAASEERREVLEVNKKLKQKNQQLKMIMDQLRNLIWEI) are a coiled coil.

It belongs to the Mediator complex subunit 30 family. Component of the Mediator complex.

It is found in the nucleus. In terms of biological role, component of the Mediator complex, a coactivator involved in the regulated transcription of nearly all RNA polymerase II-dependent genes. Mediator functions as a bridge to convey information from gene-specific regulatory proteins to the basal RNA polymerase II transcription machinery. Mediator is recruited to promoters by direct interactions with regulatory proteins and serves as a scaffold for the assembly of a functional preinitiation complex with RNA polymerase II and the general transcription factors. The sequence is that of Mediator of RNA polymerase II transcription subunit 30 (med30) from Danio rerio (Zebrafish).